Reading from the N-terminus, the 589-residue chain is Protein FAM161B (589 aa).

Disordered regions lie at residues 1-166 (MTVG…VCSW), 265-297 (KKEQ…RKIP), and 386-444 (AERR…GLAS). A compositionally biased stretch (acidic residues) spans 92–106 (PDSDLNDAEDEEDLE). Over residues 151–166 (TSDSGPPSQHRSVCSW) the composition is skewed to polar residues. Over residues 265–275 (KKEQQKEDAPQ) the composition is skewed to basic and acidic residues. Residues 287–297 (SPKKATSRKIP) are compositionally biased toward basic residues. Basic and acidic residues predominate over residues 386–396 (AERRETRETTR). Residues 510–577 (EEVFKAKLKE…ALKQAGLEEE (68 aa)) adopt a coiled-coil conformation.

The protein belongs to the FAM161 family. In terms of assembly, interacts with FAM161A.

The sequence is that of Protein FAM161B (Fam161b) from Mus musculus (Mouse).